The sequence spans 58 residues: Gigasin-4 (58 aa).

In terms of tissue distribution, component of the organic matrix of calcified shell layers.

The sequence is that of Gigasin-4 from Magallana gigas (Pacific oyster).